The primary structure comprises 392 residues: Xyloside xylosyltransferase 1 (392 aa).

The Cytoplasmic segment spans residues 1–19 (MGLLRGGAACARAMARLGA). Residues 20-42 (LRSHYCALLLAAALAVCAFYYLG) form a helical; Signal-anchor for type II membrane protein membrane-spanning segment. Residues 43–392 (SGRETFSSAT…GNCNTPIPED (350 aa)) are Lumenal-facing. 103-105 (MFT) provides a ligand contact to UDP-alpha-D-xylose. D225 provides a ligand contact to Mn(2+). L226 contacts UDP-alpha-D-xylose. D227 lines the Mn(2+) pocket. Positions 262-265 (HTFW) are interaction with target proteins. The UDP-alpha-D-xylose site is built by S289, L327, and Q330. 2 residues coordinate a glycoprotein: Q330 and W359. Cystine bridges form between C349–C374 and C356–C385. H382 is a Mn(2+) binding site. N384 is a binding site for a glycoprotein.

This sequence belongs to the glycosyltransferase 8 family. Homodimer. Dimer formation may be essential for the retention in endoplasmic reticulum. Mg(2+) is required as a cofactor. It depends on Mn(2+) as a cofactor.

The protein resides in the endoplasmic reticulum membrane. It carries out the reaction 3-O-[alpha-D-xylosyl-(1-&gt;3)-beta-D-glucosyl]-L-seryl-[EGF-like domain protein] + UDP-alpha-D-xylose = 3-O-[alpha-D-xylosyl-(1-&gt;3)-alpha-D-xylosyl-(1-&gt;3)-beta-D-glucosyl]-L-seryl-[EGF-like domain protein] + UDP + H(+). In terms of biological role, alpha-1,3-xylosyltransferase, which elongates the O-linked xylose-glucose disaccharide attached to EGF-like repeats in the extracellular domain of target proteins by catalyzing the addition of the second xylose. Known targets include Notch proteins and coagulation factors, such as F9. This chain is Xyloside xylosyltransferase 1 (Xxylt1), found in Mus musculus (Mouse).